We begin with the raw amino-acid sequence, 122 residues long: MIQVQTRLKVADNSGGIKAMCIKVLGGSKRRYANIGDVIKVSIKEVVPRGKVKKGDVYDAVVVRTAHGVRRSDGSRIRFDSNAIVLLNTKREPIGTRIFGPVTRELRSAQFMKIVSLAPEVL.

This sequence belongs to the universal ribosomal protein uL14 family. In terms of assembly, part of the 50S ribosomal subunit. Forms a cluster with proteins L3 and L19. In the 70S ribosome, L14 and L19 interact and together make contacts with the 16S rRNA in bridges B5 and B8.

Its function is as follows. Binds to 23S rRNA. Forms part of two intersubunit bridges in the 70S ribosome. This is Large ribosomal subunit protein uL14 from Vesicomyosocius okutanii subsp. Calyptogena okutanii (strain HA).